Consider the following 315-residue polypeptide: Ribosomal RNA small subunit methyltransferase H (315 aa).

S-adenosyl-L-methionine-binding positions include 37–39 (GGH), Asp57, Phe83, Asp105, and Gln112.

The protein belongs to the methyltransferase superfamily. RsmH family.

Its subcellular location is the cytoplasm. The catalysed reaction is cytidine(1402) in 16S rRNA + S-adenosyl-L-methionine = N(4)-methylcytidine(1402) in 16S rRNA + S-adenosyl-L-homocysteine + H(+). Functionally, specifically methylates the N4 position of cytidine in position 1402 (C1402) of 16S rRNA. In Pseudomonas entomophila (strain L48), this protein is Ribosomal RNA small subunit methyltransferase H.